The following is a 183-amino-acid chain: uncharacterized protein (183 aa).

Residues 1 to 23 (MGSSFVIDRSSSSPAPPRGPAPK) are disordered.

This is an uncharacterized protein from Saccharomyces cerevisiae (strain ATCC 204508 / S288c) (Baker's yeast).